A 322-amino-acid chain; its full sequence is Hapalindole dimethylallyltransferase (322 aa).

Residues Arg-46, Arg-60, Lys-115, Asn-166, Tyr-168, Arg-221, Tyr-225, and Lys-275 each coordinate dimethylallyl diphosphate.

The protein belongs to the aromatic prenyltransferase family.

It catalyses the reaction hapalindole G + dimethylallyl diphosphate = ambiguine A + diphosphate. The catalysed reaction is hapalindole U + dimethylallyl diphosphate + H(+) = ambiguine H + diphosphate. Its activity is regulated as follows. Activity is slightly increased in the presence of Mg(2+). In terms of biological role, prenyltransferase involved in the biosynthesis of ambiguines, a family of hapalindole-type alkaloids. Catalyzes the reverse prenylation of hapalindole G or U at the C2 position with dimethylallyl diphosphate (DMAPP) to generate ambiguine A or H, respectively. In addition, accepts hapalindole A, an epimer of hapalindole G, and catalyzes normal prenylation at its C2 position. The protein is Hapalindole dimethylallyltransferase of Fischerella ambigua (strain UTEX 1903).